Here is a 60-residue protein sequence, read N- to C-terminus: Cytotoxin 2 (60 aa).

Cystine bridges form between Cys-3–Cys-21, Cys-14–Cys-38, Cys-42–Cys-53, and Cys-54–Cys-59.

Belongs to the three-finger toxin family. Short-chain subfamily. Type IA cytotoxin sub-subfamily. Monomer in solution; Homodimer and oligomer in the presence of negatively charged lipids forming a pore with a size ranging between 20 and 30 Angstroms. In terms of tissue distribution, expressed by the venom gland.

It is found in the secreted. The protein localises to the target cell membrane. Its function is as follows. Shows cytolytic activity on many different cells by forming pore in lipid membranes. In vivo, increases heart rate or kills the animal by cardiac arrest. In addition, it binds to heparin with high affinity, interacts with Kv channel-interacting protein 1 (KCNIP1) in a calcium-independent manner, and binds to integrin alpha-V/beta-3 (ITGAV/ITGB3) with moderate affinity. This chain is Cytotoxin 2, found in Naja nivea (Cape cobra).